The sequence spans 124 residues: Large ribosomal subunit protein bL12 (124 aa).

This sequence belongs to the bacterial ribosomal protein bL12 family. As to quaternary structure, homodimer. Part of the ribosomal stalk of the 50S ribosomal subunit. Forms a multimeric L10(L12)X complex, where L10 forms an elongated spine to which 2 to 4 L12 dimers bind in a sequential fashion. Binds GTP-bound translation factors.

Functionally, forms part of the ribosomal stalk which helps the ribosome interact with GTP-bound translation factors. Is thus essential for accurate translation. The protein is Large ribosomal subunit protein bL12 of Cupriavidus taiwanensis (strain DSM 17343 / BCRC 17206 / CCUG 44338 / CIP 107171 / LMG 19424 / R1) (Ralstonia taiwanensis (strain LMG 19424)).